Reading from the N-terminus, the 267-residue chain is Indole-3-glycerol phosphate synthase (267 aa).

Belongs to the TrpC family.

It carries out the reaction 1-(2-carboxyphenylamino)-1-deoxy-D-ribulose 5-phosphate + H(+) = (1S,2R)-1-C-(indol-3-yl)glycerol 3-phosphate + CO2 + H2O. Its pathway is amino-acid biosynthesis; L-tryptophan biosynthesis; L-tryptophan from chorismate: step 4/5. The chain is Indole-3-glycerol phosphate synthase from Verminephrobacter eiseniae (strain EF01-2).